The following is a 344-amino-acid chain: Nuclear distribution protein nudE-like 1-A (344 aa).

The stretch at Y26–R187 forms a coiled coil. Residues L181–V190 are compositionally biased toward basic and acidic residues. Disordered regions lie at residues L181–A209 and P322–V344.

Belongs to the nudE family. In terms of processing, phosphorylated in mitosis.

Its subcellular location is the cytoplasm. It localises to the cytoskeleton. It is found in the microtubule organizing center. The protein resides in the centrosome. The protein localises to the spindle. In terms of biological role, required for organization of the cellular microtubule array and microtubule anchoring at the centrosome. Positively regulates the activity of the minus-end directed microtubule motor protein dynein. May enhance dynein-mediated microtubule sliding by targeting dynein to the microtubule plus end. This chain is Nuclear distribution protein nudE-like 1-A (ndel1a), found in Danio rerio (Zebrafish).